The following is a 313-amino-acid chain: Homoserine O-succinyltransferase (313 aa).

Cys-142 acts as the Acyl-thioester intermediate in catalysis. Substrate is bound by residues Lys-163 and Ser-192. The active-site Proton acceptor is His-235. The active site involves Glu-237. Residue Arg-249 participates in substrate binding.

The protein belongs to the MetA family.

Its subcellular location is the cytoplasm. The catalysed reaction is L-homoserine + succinyl-CoA = O-succinyl-L-homoserine + CoA. It participates in amino-acid biosynthesis; L-methionine biosynthesis via de novo pathway; O-succinyl-L-homoserine from L-homoserine: step 1/1. Functionally, transfers a succinyl group from succinyl-CoA to L-homoserine, forming succinyl-L-homoserine. This Shewanella baltica (strain OS223) protein is Homoserine O-succinyltransferase.